A 320-amino-acid chain; its full sequence is uncharacterized protein (320 aa).

The residue at position 61 (R61) is an Omega-N-methylarginine. The disordered stretch occupies residues 299-320 (LHLQHQKQTSKDAGRQTPERKA). Residues 307–320 (TSKDAGRQTPERKA) are compositionally biased toward basic and acidic residues. The residue at position 315 (T315) is a Phosphothreonine.

This is an uncharacterized protein from Mus musculus (Mouse).